A 1118-amino-acid polypeptide reads, in one-letter code: Cytospin-A (1118 aa).

Disordered stretches follow at residues 1–157 (MKKS…DGQI) and 198–221 (GGKELQEGPEEEEEEEEEEKPHVS). 2 stretches are compositionally biased toward polar residues: residues 57–102 (NPTS…TKET) and 112–123 (SRASANKKQSAA). Residues 144–153 (SESRMSKSKS) are compositionally biased toward basic and acidic residues. Over residues 204–215 (EGPEEEEEEEEE) the composition is skewed to acidic residues. A coiled-coil region spans residues 225-264 (AADVESTLILLQEQNQAIREELNLLKSENRMLKDRLNALG). The tract at residues 289 to 379 (AGSGQSDGGG…RRGSSGNASE (91 aa)) is disordered. Residues 343-363 (SSDDALDAPSGASSSSESECA) show a composition bias toward low complexity. Coiled coils occupy residues 384–438 (CLTE…MDSL) and 475–796 (GRYM…RGRV). Disordered regions lie at residues 771–790 (QEKNEKLSKELEEVKSRKQD), 837–876 (FDSASQGPPSNGASVTPTVSAAPLPRTPLSPSPMKTPPAA), and 920–1001 (SAAS…ERKD). Positions 838 to 855 (DSASQGPPSNGASVTPTV) are enriched in polar residues. Residues 861–872 (PRTPLSPSPMKT) show a composition bias toward pro residues. Residues 930-945 (QRVSNMDSTKTISVSR) show a composition bias toward polar residues. A compositionally biased stretch (basic and acidic residues) spans 946-956 (RSSEEMKRDMS). The span at 961–986 (ASSTSLMAMSAASAPLSLSSSSPTAS) shows a compositional bias: low complexity. Residues 1012–1117 (GSKRNALLKW…YVTAIYKYFE (106 aa)) enclose the Calponin-homology (CH) domain.

This sequence belongs to the cytospin-A family. As to quaternary structure, may interact with both microtubules and actin cytoskeleton.

The protein resides in the cytoplasm. Its subcellular location is the cytoskeleton. It localises to the spindle. The protein localises to the cell junction. It is found in the gap junction. Involved in cytokinesis and spindle organization. May play a role in actin cytoskeleton organization and microtubule stabilization and hence required for proper cell adhesion and migration. The sequence is that of Cytospin-A (specc1l) from Takifugu rubripes (Japanese pufferfish).